The chain runs to 203 residues: MSEHVNKYTEYEARTKAIETLLYERGLITPAAVDRVVSYYENEIGPMGGAKVVAKSWVDPEYRKWLEEDATAAMASLGYAGEQAHQISAVFNDSQTHHVVVCTLCSCYPWPVLGLPPAWYKSMEYRSRVVADPRGVLKRDFGFDIPDEVEVRVWDSSSEIRYIVIPERPAGTDGWSEEELTKLVSRDSMIGVSNALTPQEVIV.

Co(3+) contacts are provided by Cys102, Cys105, Ser106, and Cys107.

The protein belongs to the nitrile hydratase subunit alpha family. Heterodimer of an alpha and a beta chain. Requires Co(3+) as cofactor.

The catalysed reaction is an aliphatic primary amide = an aliphatic nitrile + H2O. Functionally, NHase catalyzes the hydration of various nitrile compounds to the corresponding amides. This chain is High-molecular weight cobalt-containing nitrile hydratase subunit alpha (nhhA), found in Rhodococcus rhodochrous.